We begin with the raw amino-acid sequence, 281 residues long: DegV domain-containing protein SCO2569 (281 aa).

Residues valine 5–serine 280 form the DegV domain. Residues threonine 62 and serine 95 each contribute to the hexadecanoate site.

May bind long-chain fatty acids, such as palmitate, and may play a role in lipid transport or fatty acid metabolism. The protein is DegV domain-containing protein SCO2569 of Streptomyces coelicolor (strain ATCC BAA-471 / A3(2) / M145).